A 210-amino-acid polypeptide reads, in one-letter code: Dephospho-CoA kinase (210 aa).

The 199-residue stretch at 4-202 (WVGLTGGIGS…AFYSGIFASK (199 aa)) folds into the DPCK domain. ATP is bound at residue 12 to 17 (GSGKSA).

Belongs to the CoaE family.

It is found in the cytoplasm. The catalysed reaction is 3'-dephospho-CoA + ATP = ADP + CoA + H(+). The protein operates within cofactor biosynthesis; coenzyme A biosynthesis; CoA from (R)-pantothenate: step 5/5. In terms of biological role, catalyzes the phosphorylation of the 3'-hydroxyl group of dephosphocoenzyme A to form coenzyme A. The polypeptide is Dephospho-CoA kinase (Neisseria gonorrhoeae).